The following is a 72-amino-acid chain: MSYQQQQCKQPCQPPPVCPTPKCPEPCPPPKCPEPCPPPKCPQPCPPQQCQQKCPPVTPSPPCQPKCPPKSK.

A compositionally biased stretch (low complexity) spans 1–11; sequence MSYQQQQCKQP. The interval 1–20 is disordered; that stretch reads MSYQQQQCKQPCQPPPVCPT. A run of 3 repeats spans residues 21-29, 30-38, and 39-47. The 3 X 9 AA tandem repeats of P-K-C-P-[EQ]-P-C-P-P stretch occupies residues 21 to 47; that stretch reads PKCPEPCPPPKCPEPCPPPKCPQPCPP. Residues 42 to 72 are disordered; the sequence is PQPCPPQQCQQKCPPVTPSPPCQPKCPPKSK. Residues 56–72 are compositionally biased toward pro residues; that stretch reads PVTPSPPCQPKCPPKSK.

It belongs to the cornifin (SPRR) family.

It is found in the cytoplasm. Its function is as follows. Cross-linked envelope protein of keratinocytes. It is a keratinocyte protein that first appears in the cell cytosol, but ultimately becomes cross-linked to membrane proteins by transglutaminase. All that results in the formation of an insoluble envelope beneath the plasma membrane. This is Small proline-rich protein 2E (SPRR2E) from Homo sapiens (Human).